A 250-amino-acid polypeptide reads, in one-letter code: Triosephosphate isomerase (250 aa).

9–11 (NWK) is a substrate binding site. The active-site Electrophile is the histidine 95. Glutamate 167 functions as the Proton acceptor in the catalytic mechanism. Substrate contacts are provided by residues glycine 173, serine 212, and 233–234 (GG).

The protein belongs to the triosephosphate isomerase family. As to quaternary structure, homodimer.

The protein resides in the cytoplasm. The enzyme catalyses D-glyceraldehyde 3-phosphate = dihydroxyacetone phosphate. It participates in carbohydrate biosynthesis; gluconeogenesis. Its pathway is carbohydrate degradation; glycolysis; D-glyceraldehyde 3-phosphate from glycerone phosphate: step 1/1. Involved in the gluconeogenesis. Catalyzes stereospecifically the conversion of dihydroxyacetone phosphate (DHAP) to D-glyceraldehyde-3-phosphate (G3P). In Nitrosococcus oceani (strain ATCC 19707 / BCRC 17464 / JCM 30415 / NCIMB 11848 / C-107), this protein is Triosephosphate isomerase.